The primary structure comprises 467 residues: Argininosuccinate lyase (467 aa).

Belongs to the lyase 1 family. Argininosuccinate lyase subfamily.

The protein localises to the cytoplasm. The enzyme catalyses 2-(N(omega)-L-arginino)succinate = fumarate + L-arginine. The protein operates within amino-acid biosynthesis; L-arginine biosynthesis; L-arginine from L-ornithine and carbamoyl phosphate: step 3/3. The sequence is that of Argininosuccinate lyase from Rhizobium johnstonii (strain DSM 114642 / LMG 32736 / 3841) (Rhizobium leguminosarum bv. viciae).